A 434-amino-acid chain; its full sequence is Arginine/serine-rich coiled-coil protein 2 (434 aa).

A compositionally biased stretch (basic and acidic residues) spans methionine 1–serine 27. Residues methionine 1–asparagine 230 form a disordered region. Alanine 2 carries the post-translational modification N-acetylalanine. Position 4 is a phosphoserine (serine 4). Threonine 6 and threonine 16 each carry phosphothreonine. Serine 17, serine 30, and serine 32 each carry phosphoserine. Over residues alanine 35–lysine 51 the composition is skewed to basic residues. Residues arginine 66 to arginine 111 are compositionally biased toward basic and acidic residues. Serine 104 bears the Phosphoserine mark. The span at histidine 112–serine 214 shows a compositional bias: basic residues. Residues asparagine 230 to alanine 270 adopt a coiled-coil conformation. Lysine 375 participates in a covalent cross-link: Glycyl lysine isopeptide (Lys-Gly) (interchain with G-Cter in SUMO1); alternate. Lysine 375 is covalently cross-linked (Glycyl lysine isopeptide (Lys-Gly) (interchain with G-Cter in SUMO2); alternate). Serine 376 carries the post-translational modification Phosphoserine.

Belongs to the RSRC2 family.

In Homo sapiens (Human), this protein is Arginine/serine-rich coiled-coil protein 2 (RSRC2).